The following is a 55-amino-acid chain: Large ribosomal subunit protein bL33B (55 aa).

This sequence belongs to the bacterial ribosomal protein bL33 family.

This Mycolicibacterium paratuberculosis (strain ATCC BAA-968 / K-10) (Mycobacterium paratuberculosis) protein is Large ribosomal subunit protein bL33B.